A 187-amino-acid chain; its full sequence is MMMNSPLDYDVLLEIMSYCPATEMAKFRLLSKECNKRSYEMSFINRHLHRTNSFLGYIFYYKDNKWFRNHSCFVSGVDEKDKNRINLAFLPPLCNVSIEACDTHHGILLCVDVVFKGRQKIPDYIVCKPATKQYRIIPNPKTRFGTVATGLMVISSNPFRYKIIRVSDTWARVGRDGVYNLRESLFE.

In terms of domain architecture, F-box spans 2-49 (MMNSPLDYDVLLEIMSYCPATEMAKFRLLSKECNKRSYEMSFINRHLH).

This chain is F-box protein At5g41720, found in Arabidopsis thaliana (Mouse-ear cress).